Consider the following 622-residue polypeptide: MIEKLTFGLFKKEDARSFMRLMAYVRPYKIRIVAALIAIFGVAATESYLAAFIAPLINHGFSAPAAPPDLSAAAGILSTLQNWREQFTYMVWGTENKIWTVPLFLIILVVIRGICRFTSTYLMTWVSVMTISKIRKDMFAKMLTLSSRYHQETPSGTVLMNMLNLTEQSVSNASDIFTVLTRDTMIVTGLTIVLLYLNWQLSLIVVLMFPLLSLLSRYYRDRLKHVISDSQKSIGTMNNVIAETHQGHRVVKLFNGQAQAANRFDAVNRTIVRLSKKITQATAAHSPFSELIASIALAVVIFIALWQSQNGYTTIGEFMAFIVAMLQMYAPIKSLANISIPMQTMFLAADGVCAFLDTPPEQDKGTLAPQRVEGRISFRNVDVEYRSDGIKALDNFNLDIRQGERVALVGRSGSGKSTVVNLLPRFVEPSAGNICIDGIDIADIKLDCLRAQFALVSQDVFLFDDTLFENVRYSRPDAGEAEVLSALQAANLQSLIDASPLGLHQPIGSNGSNLSGGQRQRVAIARAILKDAPILLLDEATSALDNESERLVQQALERLMENRTGIIVAHRLTTVESADRIIVMDGGKIIEQGTHDQLMFQNGYYTMLRNISGKDTAAVQTA.

5 helical membrane-spanning segments follow: residues Ile-32–Phe-52, Val-91–Ile-111, Ile-192–Leu-212, Ser-286–Trp-306, and Tyr-312–Ile-332. Residues Val-33–Thr-344 form the ABC transmembrane type-1 domain. Residues Phe-378–Ile-611 enclose the ABC transporter domain. Gly-410 to Ser-417 is a binding site for ATP.

The protein belongs to the ABC transporter superfamily. Lipid exporter (TC 3.A.1.106) family. In terms of assembly, homodimer.

The protein localises to the cell inner membrane. The catalysed reaction is ATP + H2O + lipid A-core oligosaccharideSide 1 = ADP + phosphate + lipid A-core oligosaccharideSide 2.. In terms of biological role, involved in lipopolysaccharide (LPS) biosynthesis. Translocates lipid A-core from the inner to the outer leaflet of the inner membrane. Transmembrane domains (TMD) form a pore in the inner membrane and the ATP-binding domain (NBD) is responsible for energy generation. In Neisseria gonorrhoeae (strain ATCC 700825 / FA 1090), this protein is ATP-dependent lipid A-core flippase.